The sequence spans 209 residues: T-cell surface glycoprotein CD8 beta chain (209 aa).

Residues 1–21 form the signal peptide; sequence MRPRMWLLLSAQLAALHGNSV. The Ig-like V-type domain maps to 22-131; that stretch reads LQQTPAYIMV…TLIFGTGTQL (110 aa). Over 22-169 the chain is Extracellular; it reads LQQTPAYIMV…ETRKGPLCSP (148 aa). Cys-41 and Cys-115 are oxidised to a cystine. N-linked (GlcNAc...) asparagine glycosylation occurs at Asn-101. Residues 170–190 form a helical membrane-spanning segment; that stretch reads ITLSLLVAGILVLLVSLGVAI. At 191–209 the chain is on the cytoplasmic side; sequence HLYCRQRRARLRFMKQFYK.

As to quaternary structure, forms disulfide-linked heterodimers with CD8A at the cell surface. Interacts with CD3D; this interaction couples TCR-CD3 with CD8. Interacts with LCK. In terms of processing, phosphorylated as a consequence of T-cell activation. Palmitoylated at the cytoplasmic tail and thereby targets the heterodimer CD8A/CD8B to lipid rafts unlike CD8A homodimers.

Its subcellular location is the cell membrane. Its function is as follows. Integral membrane glycoprotein that plays an essential role in the immune response and serves multiple functions in responses against both external and internal offenses. In T-cells, functions primarily as a coreceptor for MHC class I molecule:peptide complex. The antigens presented by class I peptides are derived from cytosolic proteins while class II derived from extracellular proteins. Interacts simultaneously with the T-cell receptor (TCR) and the MHC class I proteins presented by antigen presenting cells (APCs). In turn, recruits the Src kinase LCK to the vicinity of the TCR-CD3 complex. A palmitoylation site in the cytoplasmic tail of CD8B chain contributes to partitioning of CD8 into the plasma membrane lipid rafts where signaling proteins are enriched. Once LCK recruited, it initiates different intracellular signaling pathways by phosphorylating various substrates ultimately leading to lymphokine production, motility, adhesion and activation of cytotoxic T-lymphocytes (CTLs). Additionally, plays a critical role in thymic selection of CD8+ T-cells. This chain is T-cell surface glycoprotein CD8 beta chain (CD8B), found in Saimiri sciureus (Common squirrel monkey).